Reading from the N-terminus, the 148-residue chain is Large ribosomal subunit protein bL9 (148 aa).

This sequence belongs to the bacterial ribosomal protein bL9 family.

Its function is as follows. Binds to the 23S rRNA. The chain is Large ribosomal subunit protein bL9 from Streptomyces griseus subsp. griseus (strain JCM 4626 / CBS 651.72 / NBRC 13350 / KCC S-0626 / ISP 5235).